A 422-amino-acid chain; its full sequence is UDP-N-acetylmuramoylalanine--D-glutamate ligase (422 aa).

Gly102–Thr108 is a binding site for ATP.

It belongs to the MurCDEF family.

The protein resides in the cytoplasm. It carries out the reaction UDP-N-acetyl-alpha-D-muramoyl-L-alanine + D-glutamate + ATP = UDP-N-acetyl-alpha-D-muramoyl-L-alanyl-D-glutamate + ADP + phosphate + H(+). Its pathway is cell wall biogenesis; peptidoglycan biosynthesis. Functionally, cell wall formation. Catalyzes the addition of glutamate to the nucleotide precursor UDP-N-acetylmuramoyl-L-alanine (UMA). In Helicobacter pylori (strain J99 / ATCC 700824) (Campylobacter pylori J99), this protein is UDP-N-acetylmuramoylalanine--D-glutamate ligase.